The sequence spans 241 residues: Small ribosomal subunit protein bS6 (241 aa).

Positions lysine 97–threonine 108 are enriched in basic residues. The interval lysine 97–asparagine 241 is disordered. A compositionally biased stretch (basic and acidic residues) spans proline 109–asparagine 118. Low complexity-rich tracts occupy residues glutamine 130–glutamine 151 and aspartate 161–glycine 182. Over residues arginine 189–histidine 202 the composition is skewed to polar residues.

Belongs to the bacterial ribosomal protein bS6 family.

Functionally, binds together with bS18 to 16S ribosomal RNA. This chain is Small ribosomal subunit protein bS6, found in Mesomycoplasma hyopneumoniae (strain 232) (Mycoplasma hyopneumoniae).